Here is a 417-residue protein sequence, read N- to C-terminus: Interferon-gamma-inducible GTPase 10 (417 aa).

A lipid anchor (N-myristoyl glycine) is attached at glycine 2. The IRG-type G domain occupies alanine 67 to glutamate 249. GDP is bound by residues glycine 78, alanine 79, serine 82, threonine 83, serine 101, lysine 183, aspartate 185, and serine 231. 2 helical membrane passes run glutamate 284–aspartate 302 and alanine 370–tyrosine 387.

Belongs to the TRAFAC class dynamin-like GTPase superfamily. GB1/RHD3 GTPase family. GB1 subfamily. As to quaternary structure, homooligomer; homooligomerization occurs upon GTP-binding and is required for the association with membranous structures. Homodimer; GDP-binding induces formation of an inactive head-to-head homodimer. Myristoylation is required for localization to pathogen-containing vacuoles. In terms of processing, (Microbial infection) Phosphorylated by Toxoplasma gondii ROP18.

It is found in the membrane. The protein localises to the cytoplasmic vesicle membrane. The enzyme catalyses GTP + H2O = GDP + phosphate + H(+). Its function is as follows. Interferon (IFN)-inducible GTPase that plays important roles in innate immunity against a diverse range of bacterial, viral and protozoan pathogens by mediating cytosolic release of pathogenic ligands that activate the inflammasomes. Following infection, recruited to the membrane of pathogens in a GBP-dependent manner and mediates disruption of the pathogen membrane, liberating ligands that are detected by inflammasomes, such as lipopolysaccharide (LPS) that activates the non-canonical CASP4/CASP11 inflammasome or double-stranded DNA (dsDNA) that activates the AIM2 inflammasome. Promotes AIM2 and NLRP3 inflammasome activation following A.fumigatus infection by liberating beta-glucan, which directly triggers inflammasome assembly. Promotes NLRP3 inflammasome activation following influenza A virus infection. The protein is Interferon-gamma-inducible GTPase 10 of Mus musculus (Mouse).